The sequence spans 508 residues: Steroid 17-alpha-hydroxylase/17,20 lyase (508 aa).

Asn202 contributes to the substrate binding site. Cys442 contributes to the heme binding site.

It belongs to the cytochrome P450 family. Heme is required as a cofactor.

It is found in the endoplasmic reticulum membrane. The protein resides in the microsome membrane. The catalysed reaction is a C21-steroid + reduced [NADPH--hemoprotein reductase] + O2 = a 17alpha-hydroxy-C21-steroid + oxidized [NADPH--hemoprotein reductase] + H2O + H(+). It catalyses the reaction progesterone + reduced [NADPH--hemoprotein reductase] + O2 = 17alpha-hydroxyprogesterone + oxidized [NADPH--hemoprotein reductase] + H2O + H(+). The enzyme catalyses pregnenolone + reduced [NADPH--hemoprotein reductase] + O2 = 17alpha-hydroxypregnenolone + oxidized [NADPH--hemoprotein reductase] + H2O + H(+). It carries out the reaction 17alpha-hydroxyprogesterone + reduced [NADPH--hemoprotein reductase] + O2 = androst-4-ene-3,17-dione + acetate + oxidized [NADPH--hemoprotein reductase] + H2O + 2 H(+). The catalysed reaction is 17alpha-hydroxyprogesterone + reduced [NADPH--hemoprotein reductase] + O2 = 16alpha,17alpha-dihydroxyprogesterone + oxidized [NADPH--hemoprotein reductase] + H2O + H(+). It catalyses the reaction 16alpha,17alpha-dihydroxyprogesterone + reduced [NADPH--hemoprotein reductase] + O2 = 6beta,16alpha,17alpha-trihydroxyprogesterone + oxidized [NADPH--hemoprotein reductase] + H2O + H(+). The enzyme catalyses 17alpha-hydroxypregnenolone + reduced [NADPH--hemoprotein reductase] + O2 = 3beta-hydroxyandrost-5-en-17-one + acetate + oxidized [NADPH--hemoprotein reductase] + H2O + 2 H(+). It carries out the reaction 16alpha,17alpha-dihydroxypregnenolone + reduced [NADPH--hemoprotein reductase] + O2 = 3beta,16alpha-dihydroxy-androst-5-en-17-one + acetate + oxidized [NADPH--hemoprotein reductase] + H2O + 2 H(+). The catalysed reaction is 3beta-hydroxyandrost-5-en-17-one + reduced [NADPH--hemoprotein reductase] + O2 = 3beta,16alpha-dihydroxy-androst-5-en-17-one + oxidized [NADPH--hemoprotein reductase] + H2O + H(+). It catalyses the reaction androst-4-ene-3,17-dione + reduced [NADPH--hemoprotein reductase] + O2 = 16alpha-hydroxyandrost-4-ene-3,17-dione + oxidized [NADPH--hemoprotein reductase] + H2O + H(+). It participates in steroid hormone biosynthesis. The protein operates within steroid biosynthesis; glucocorticoid biosynthesis. With respect to regulation, regulated predominantly by intracellular cAMP levels. The 17,20-lyase activity is stimulated by cytochrome b5, which acts as an allosteric effector increasing the Vmax of the lyase activity. A cytochrome P450 monooxygenase involved in corticoid and androgen biosynthesis. Catalyzes 17-alpha hydroxylation of C21 steroids, which is common for both pathways. A second oxidative step, required only for androgen synthesis, involves an acyl-carbon cleavage. The 17-alpha hydroxy intermediates, as part of adrenal glucocorticoids biosynthesis pathway, are precursors of cortisol. Hydroxylates steroid hormones, pregnenolone and progesterone to form 17-alpha hydroxy metabolites, followed by the cleavage of the C17-C20 bond to form C19 steroids, dehydroepiandrosterone (DHEA) and androstenedione. Has 16-alpha hydroxylase activity. Catalyzes 16-alpha hydroxylation of 17-alpha hydroxy pregnenolone, followed by the cleavage of the C17-C20 bond to form 16-alpha-hydroxy DHEA. Also 16-alpha hydroxylates androgens, relevant for estriol synthesis. Mechanistically, uses molecular oxygen inserting one oxygen atom into a substrate, and reducing the second into a water molecule, with two electrons provided by NADPH via cytochrome P450 reductase (CPR; NADPH-ferrihemoprotein reductase). The chain is Steroid 17-alpha-hydroxylase/17,20 lyase (CYP17A1) from Papio cynocephalus (Yellow baboon).